Reading from the N-terminus, the 92-residue chain is Small ribosomal subunit protein uS17 (92 aa).

The protein belongs to the universal ribosomal protein uS17 family. Part of the 30S ribosomal subunit.

Functionally, one of the primary rRNA binding proteins, it binds specifically to the 5'-end of 16S ribosomal RNA. In Cupriavidus metallidurans (strain ATCC 43123 / DSM 2839 / NBRC 102507 / CH34) (Ralstonia metallidurans), this protein is Small ribosomal subunit protein uS17.